We begin with the raw amino-acid sequence, 507 residues long: Glycerol kinase (507 aa).

Threonine 14 provides a ligand contact to ADP. ATP-binding residues include threonine 14, threonine 15, and serine 16. A sn-glycerol 3-phosphate-binding site is contributed by threonine 14. An ADP-binding site is contributed by arginine 18. 4 residues coordinate sn-glycerol 3-phosphate: arginine 84, glutamate 85, tyrosine 136, and aspartate 246. Glycerol contacts are provided by arginine 84, glutamate 85, tyrosine 136, aspartate 246, and glutamine 247. ADP contacts are provided by threonine 268 and glycine 311. The ATP site is built by threonine 268, glycine 311, glutamine 315, and glycine 412. Residues glycine 412 and asparagine 416 each coordinate ADP.

This sequence belongs to the FGGY kinase family.

It carries out the reaction glycerol + ATP = sn-glycerol 3-phosphate + ADP + H(+). The protein operates within polyol metabolism; glycerol degradation via glycerol kinase pathway; sn-glycerol 3-phosphate from glycerol: step 1/1. Its activity is regulated as follows. Inhibited by fructose 1,6-bisphosphate (FBP). Its function is as follows. Key enzyme in the regulation of glycerol uptake and metabolism. Catalyzes the phosphorylation of glycerol to yield sn-glycerol 3-phosphate. The polypeptide is Glycerol kinase (Vibrio atlanticus (strain LGP32) (Vibrio splendidus (strain Mel32))).